Here is a 471-residue protein sequence, read N- to C-terminus: MIKNLSTFFVGIALSCLAGCTPIPKETTATKEYAPLEVPVPERPAGQQDVIELTTPKLDTVRVGFIGLGMRGPSAVERWTHIPGTKIVALCDLLPENAEKAQKIVTNAGMEAPALYSGSEDAWKQLCERNDIDLVYIATDWKHHTEMGIYAMEHGKHAAIEVPAAMSLDEIWALINTSEKTRKHCMQLENCVYDFFELTTLNMAQKGLFGEVLHVEGSYIHNLEEFWPYYWNNWRLDYNREFRGDVYATHGLGPACQLLNIHRGDRMKTLVAMDTKAVTGPELVKQYQKEEAPDFQNGDHTMTFIRTENGKTIHIQHDVMNPRPYSRMYQLTGTKGFANKYPIEQYCFRPDQIDSTSIPDHENLSMHSAVPEKVKEALMSQYKHPIHQELEETAKKIGGHGGMDFIMDYRLVYCLRNGLPLDMDVYDLAEWCCMADLTRLSIENGNAPVAVPDFTRGNWNKVDGYHHAFAQ.

Residues 1–15 (MIKNLSTFFVGIALS) form the signal peptide. Residue Cys16 is the site of N-palmitoyl cysteine attachment. Cys16 is lipidated: S-diacylglycerol cysteine. NAD(+) contacts are provided by residues 70 to 71 (MR), Asp92, 141 to 144 (WKHH), 161 to 162 (EV), and Asn190. Substrate is bound by residues Tyr219, Arg235, 247 to 250 (YATH), and Tyr325. Tyr247 serves as a coordination point for NAD(+).

It belongs to the Gfo/Idh/MocA family. Glycosyl hydrolase 109 subfamily. It depends on NAD(+) as a cofactor.

It localises to the cell membrane. Glycosidase. The protein is Glycosyl hydrolase family 109 protein 1 of Phocaeicola vulgatus (strain ATCC 8482 / DSM 1447 / JCM 5826 / CCUG 4940 / NBRC 14291 / NCTC 11154) (Bacteroides vulgatus).